We begin with the raw amino-acid sequence, 308 residues long: Maspardin (308 aa).

One can recognise an AB hydrolase-1 domain in the interval 87-159 (FCDGFRKLLD…NSFWLMPAFM (73 aa)). Serine 304 is subject to Phosphoserine.

The protein belongs to the AB hydrolase superfamily. As to quaternary structure, interacts with CD4. Interacts with ALDH16A1. In terms of tissue distribution, expressed in all tissues tested, including heart, brain, placenta, lung, liver, skeletal muscle, kidney and pancreas. Expressed in J.CaM1.6, HuT 78 and HeLa cell lines (at protein level).

Its subcellular location is the cytoplasm. The protein resides in the cytosol. It is found in the membrane. The protein localises to the endosome membrane. It localises to the golgi apparatus. Its subcellular location is the trans-Golgi network membrane. Functionally, may play a role as a negative regulatory factor in CD4-dependent T-cell activation. The polypeptide is Maspardin (SPG21) (Homo sapiens (Human)).